Consider the following 341-residue polypeptide: S-adenosylmethionine:tRNA ribosyltransferase-isomerase (341 aa).

It belongs to the QueA family. In terms of assembly, monomer.

It localises to the cytoplasm. The catalysed reaction is 7-aminomethyl-7-carbaguanosine(34) in tRNA + S-adenosyl-L-methionine = epoxyqueuosine(34) in tRNA + adenine + L-methionine + 2 H(+). It participates in tRNA modification; tRNA-queuosine biosynthesis. In terms of biological role, transfers and isomerizes the ribose moiety from AdoMet to the 7-aminomethyl group of 7-deazaguanine (preQ1-tRNA) to give epoxyqueuosine (oQ-tRNA). This chain is S-adenosylmethionine:tRNA ribosyltransferase-isomerase, found in Clostridium perfringens (strain SM101 / Type A).